We begin with the raw amino-acid sequence, 897 residues long: High molecular weight rhoptry protein 3 (897 aa).

Positions 1–24 (MRSKHLVTLFIITFLSFSTVKVWG) are cleaved as a signal peptide. Intrachain disulfides connect Cys157–Cys231, Cys244–Cys253, Cys262–Cys276, Cys421–Cys620, and Cys475–Cys536. A helical transmembrane segment spans residues 597-615 (FVLYFISIISVLYINEYYY). Disordered stretches follow at residues 788–845 (KEQS…SNLK) and 859–897 (QLDK…ENEL). Positions 792–801 (KSTSAASTSD) are enriched in polar residues. Residues 802-817 (EISGSEGPSTESTSTG) are compositionally biased toward low complexity. Ser804 carries the post-translational modification Phosphoserine; by CDPK1. The segment covering 820 to 832 (GEDKTTDNTYKEM) has biased composition (basic and acidic residues). The span at 865–876 (PKKKKSKRKKKR) shows a compositional bias: basic residues. Positions 877-889 (DSSSDRILLEESK) are enriched in basic and acidic residues.

As to quaternary structure, component of the RhopH complex. RhopH complex is composed of CLAG3.1/CLAG3.2, RhopH2 and RhopH3 with a 1:1:1 subunit stoichiometry. Interacts with CLAG3.1/CLAG3.2. Interacts with CDPK1; the interaction promotes RhopH3 phosphorylation in merozoites. Post-translationally, proteolytically cleaved near C-terminus.

Its subcellular location is the host cell membrane. The protein resides in the parasitophorous vacuole membrane. It is found in the cytoplasm. It localises to the cytoplasmic vesicle. The protein localises to the secretory vesicle. Its subcellular location is the rhoptry. In terms of biological role, participates in the formation of new permeability pathways in Plasmodium-infected erythrocytes enabling the uptake of nutrients from the blood plasma. Required for maintaining invasion capacity of merozoites. Required for the trophozoite to schizont developmental transition of the intracellular parasite. The sequence is that of High molecular weight rhoptry protein 3 from Plasmodium falciparum (isolate 3D7).